Here is a 166-residue protein sequence, read N- to C-terminus: Cofilin-1 (166 aa).

Position 2 is an N-acetylalanine (alanine 2). At serine 3 the chain carries Phosphoserine; by NRK. The ADF-H domain maps to 4 to 153 (GVAVSDGVIK…KDRCTLAEKL (150 aa)). Phosphoserine is present on serine 8. Lysine 13 bears the N6-acetyllysine mark. Threonine 25 is modified (phosphothreonine). Residues 30-34 (KKRKK) carry the Nuclear localization signal motif. A Phosphoserine modification is found at serine 41. Threonine 63 bears the Phosphothreonine mark. Tyrosine 68 carries the post-translational modification Phosphotyrosine. Lysine 73 is subject to N6-acetyllysine. Tyrosine 82 bears the Phosphotyrosine mark. A Phosphoserine modification is found at serine 108. Residue lysine 132 forms a Glycyl lysine isopeptide (Lys-Gly) (interchain with G-Cter in SUMO2) linkage. Position 140 is a phosphotyrosine (tyrosine 140). Lysine 144 bears the N6-acetyllysine mark. A Phosphoserine modification is found at serine 156.

This sequence belongs to the actin-binding proteins ADF family. As to quaternary structure, can bind G- and F-actin in a 1:1 ratio of cofilin to actin. It is a major component of intranuclear and cytoplasmic actin rods. Interacts with the subcortical maternal complex (SCMC) via interaction with TLE6 isoform 1 and NLRP5. Interacts with C9orf72. In terms of assembly, (Microbial infection) Interacts with human respiratory syncytial virus (HRSV) matrix protein; this interaction probably facilitates viral replication. Post-translationally, inactivated by phosphorylation on Ser-3. Phosphorylated on Ser-3 in resting cells. Dephosphorylated by PDXP/chronophin; this restores its activity in promoting actin filament depolymerization. The phosphorylation of Ser-24 may prevent recognition of the nuclear localization signal. Phosphorylated via a ARRB1-RAC1-LIMK1-PAK1 cascade upon active ligand stimulation of atypical chemokine receptor ACKR2. As to expression, widely distributed in various tissues.

Its subcellular location is the nucleus matrix. It is found in the cytoplasm. The protein localises to the cytoskeleton. The protein resides in the cell projection. It localises to the ruffle membrane. Its subcellular location is the lamellipodium membrane. It is found in the lamellipodium. The protein localises to the growth cone. The protein resides in the axon. In terms of biological role, binds to F-actin and exhibits pH-sensitive F-actin depolymerizing activity. In conjunction with the subcortical maternal complex (SCMC), plays an essential role for zygotes to progress beyond the first embryonic cell divisions via regulation of actin dynamics. Required for the centralization of the mitotic spindle and symmetric division of zygotes. Plays a role in the regulation of cell morphology and cytoskeletal organization in epithelial cells. Required for the up-regulation of atypical chemokine receptor ACKR2 from endosomal compartment to cell membrane, increasing its efficiency in chemokine uptake and degradation. Required for neural tube morphogenesis and neural crest cell migration. The protein is Cofilin-1 (CFL1) of Homo sapiens (Human).